Here is a 309-residue protein sequence, read N- to C-terminus: Zinc-finger homeodomain protein 5 (309 aa).

Residues 1-16 (MDMRSHEMIERRREDN) show a composition bias toward basic and acidic residues. The tract at residues 1-21 (MDMRSHEMIERRREDNGNNNG) is disordered. The ZF-HD dimerization-type; degenerate zinc finger occupies 76-125 (YRECLKNHAASVGGSVHDGCGEFMPSGEEGTIEALRCAACDCHRNFHRKE). The segment at residues 240–303 (KKRFRTKFTT…NNKNNAKKPP (64 aa)) is a DNA-binding region (homeobox).

As to quaternary structure, homo- and heterodimer with other ZFHD proteins. Interacts with MIF1, MIF2 and MIF3; these interactions prevent nuclear localization and DNA-binding to inhibit transcription regulation activity. Binds to ZHD1, ZHD2, ZHD4, ZHD10 and ZHD11. As to expression, mostly expressed in flowers and inflorescence.

Its subcellular location is the nucleus. Functionally, putative transcription factor. Binds DNA at 5'-ATTA-3' consensus promoter regions. Regulates floral architecture and leaf development. Regulators in the abscisic acid (ABA) signal pathway that confers sensitivity to ABA in an ARF2-dependent manner. This Arabidopsis thaliana (Mouse-ear cress) protein is Zinc-finger homeodomain protein 5 (ZHD5).